Reading from the N-terminus, the 547-residue chain is Apolipoprotein N-acyltransferase (547 aa).

The next 5 helical transmembrane spans lie at 31 to 51 (ILSGILVGTSYIPFPPWALIF), 71 to 91 (FWAGWVTQFILTLIGFHWIAY), 106 to 126 (LALLLFCAFMHLYIPVAVAAG), 180 to 200 (LVGFHGLSAVVLLFNAWMGYV), and 210 to 230 (ALSHLSLLALTFAALVGWGFW). The 269-residue stretch at 247 to 515 (VQANIGNLEK…KYLKNAPLTF (269 aa)) folds into the CN hydrolase domain. Catalysis depends on Glu294, which acts as the Proton acceptor. Lys364 is a catalytic residue. Catalysis depends on Cys418, which acts as the Nucleophile. The helical transmembrane segment at 515 to 535 (FFVQWGHWDWIVILLVLGAVI) threads the bilayer.

The protein belongs to the CN hydrolase family. Apolipoprotein N-acyltransferase subfamily.

It is found in the cell inner membrane. It carries out the reaction N-terminal S-1,2-diacyl-sn-glyceryl-L-cysteinyl-[lipoprotein] + a glycerophospholipid = N-acyl-S-1,2-diacyl-sn-glyceryl-L-cysteinyl-[lipoprotein] + a 2-acyl-sn-glycero-3-phospholipid + H(+). It participates in protein modification; lipoprotein biosynthesis (N-acyl transfer). Functionally, catalyzes the phospholipid dependent N-acylation of the N-terminal cysteine of apolipoprotein, the last step in lipoprotein maturation. The protein is Apolipoprotein N-acyltransferase of Bdellovibrio bacteriovorus (strain ATCC 15356 / DSM 50701 / NCIMB 9529 / HD100).